A 931-amino-acid polypeptide reads, in one-letter code: Netrin receptor UNC5C (931 aa).

A signal peptide spans 1 to 40 (MRKGLRATAARCGLGLGYLLQMLVLPALALLSASGTGSAA). The Extracellular portion of the chain corresponds to 41–380 (QDDDFFHELP…APDSDDVALY (340 aa)). An Ig-like domain is found at 62-159 (PHFLIEPEEA…AGTTKSRKAY (98 aa)). 9 disulfide bridges follow: C83-C144, C95-C142, C188-C239, C272-C309, C276-C313, C287-C299, C328-C362, C332-C367, and C340-C352. Positions 161–256 (RIAYLRKTFE…KRKSTTATVI (96 aa)) constitute an Ig-like C2-type domain. A glycan (N-linked (GlcNAc...) asparagine) is linked at N236. TSP type-1 domains follow at residues 260–314 (NGGW…TLCP) and 316–368 (DGRW…GLCM). N361 carries an N-linked (GlcNAc...) asparagine glycan. A helical transmembrane segment spans residues 381–401 (VGIVIAVTVCLAITVVVALFV). At 402–931 (YRKNHRDFES…VVSLAAEGQY (530 aa)) the chain is on the cytoplasmic side. The segment at 402–931 (YRKNHRDFES…VVSLAAEGQY (530 aa)) is required for netrin-mediated axon repulsion of neuronal growth cones. S502 is modified (phosphoserine). Residues 530 to 673 (CTAFGTFNSL…LSTYALVGQS (144 aa)) enclose the ZU5 domain. The residue at position 568 (Y568) is a Phosphotyrosine. Residues 694–712 (SLEYSIRVYCLDDTQDALK) are interaction with DCC. In terms of domain architecture, Death spans 850–929 (QKLCSSLDAP…ETVVSLAAEG (80 aa)).

The protein belongs to the unc-5 family. Interacts with DCC (via cytoplasmic domain). Interacts (tyrosine phosphorylated form) with PTPN11. Interacts (via extracellular domain) with FLRT3 (via extracellular domain). Interacts (via Ig-like C2-type domain) with DSCAM (via extracellular domain). Interacts (via death domain) with DAPK1. Interacts (via cytoplasmic domain) with TUBB3; this interaction is decreased by NTN1/Netrin-1. Post-translationally, proteolytically cleaved by caspases during apoptosis. The cleavage does not take place when the receptor is associated with netrin ligand. Its cleavage by caspases is required to induce apoptosis. Phosphorylated on different cytoplasmic tyrosine residues. Phosphorylation of Tyr-568 leads to an interaction with PTPN11 phosphatase, suggesting that its activity is regulated by phosphorylation/dephosphorylation. Tyrosine phosphorylation is netrin-dependent. As to expression, detected in brain (at protein level). Mainly expressed in brain. Also expressed in kidney. Not expressed in developing or adult lung.

It localises to the cell membrane. Its subcellular location is the cell surface. It is found in the synapse. The protein localises to the synaptosome. The protein resides in the cell projection. It localises to the axon. Its subcellular location is the dendrite. It is found in the growth cone. The protein localises to the lamellipodium. The protein resides in the filopodium. Functionally, receptor for netrin required for axon guidance. Mediates axon repulsion of neuronal growth cones in the developing nervous system upon ligand binding. NTN1/Netrin-1 binding might cause dissociation of UNC5C from polymerized TUBB3 in microtubules and thereby lead to increased microtubule dynamics and axon repulsion. Axon repulsion in growth cones may also be caused by its association with DCC that may trigger signaling for repulsion. Might also collaborate with DSCAM in NTN1-mediated axon repulsion independently of DCC. Also involved in corticospinal tract axon guidance independently of DCC. Involved in dorsal root ganglion axon projection towards the spinal cord. It also acts as a dependence receptor required for apoptosis induction when not associated with netrin ligand. The chain is Netrin receptor UNC5C (Unc5c) from Rattus norvegicus (Rat).